The chain runs to 839 residues: Probable beta-glucosidase I (839 aa).

The N-linked (GlcNAc...) asparagine glycan is linked to Asn197. Residue Asp225 is part of the active site. The region spanning 395-555 (DGKTGFSFKV…GQEELISNAV (161 aa)) is the PA14 domain. Residue Asn620 is glycosylated (N-linked (GlcNAc...) asparagine).

It belongs to the glycosyl hydrolase 3 family.

The protein resides in the secreted. It carries out the reaction Hydrolysis of terminal, non-reducing beta-D-glucosyl residues with release of beta-D-glucose.. It functions in the pathway glycan metabolism; cellulose degradation. In terms of biological role, beta-glucosidases are one of a number of cellulolytic enzymes involved in the degradation of cellulosic biomass. Catalyzes the last step releasing glucose from the inhibitory cellobiose. The chain is Probable beta-glucosidase I (bglI) from Aspergillus flavus (strain ATCC 200026 / FGSC A1120 / IAM 13836 / NRRL 3357 / JCM 12722 / SRRC 167).